The sequence spans 485 residues: DNA polymerase subunit gamma-2 (485 aa).

The tract at residues 28–65 is disordered; it reads GQPELLTERSSPKGGHVKSHAELEGNGEHPEAPGSGEG. At Ser38 the chain carries Phosphoserine. The segment covering 46–58 has biased composition (basic and acidic residues); sequence SHAELEGNGEHPE.

In terms of assembly, heterotrimer composed of a catalytic subunit and a homodimer of accessory subunits (POLG:POLG2).

It is found in the mitochondrion. Its subcellular location is the mitochondrion matrix. It localises to the mitochondrion nucleoid. In terms of biological role, accessory subunit of DNA polymerase gamma solely responsible for replication of mitochondrial DNA (mtDNA). Acts as an allosteric regulator of the holoenzyme activities. Enhances the polymerase activity and the processivity of POLG by increasing its interactions with the DNA template. Suppresses POLG exonucleolytic proofreading especially toward homopolymeric templates bearing mismatched termini. Binds to single-stranded DNA. This Homo sapiens (Human) protein is DNA polymerase subunit gamma-2.